The primary structure comprises 452 residues: 23S rRNA (uracil(1939)-C(5))-methyltransferase RlmD (452 aa).

The disordered stretch occupies residues 1 to 25 (MSKKKSNSGLRFQPAGGNRTPQVPV). A TRAM domain is found at 22–80 (QVPVGKKQRLDIERLAGDGRGIAFLDGRTWFVSGALAGEAVEARVLNARGKVVEARLER). Residues cysteine 93, cysteine 99, cysteine 102, and cysteine 181 each contribute to the [4Fe-4S] cluster site. S-adenosyl-L-methionine-binding residues include glutamine 285, phenylalanine 314, asparagine 319, glutamate 335, aspartate 362, and aspartate 383. Cysteine 409 serves as the catalytic Nucleophile.

It belongs to the class I-like SAM-binding methyltransferase superfamily. RNA M5U methyltransferase family. RlmD subfamily.

It carries out the reaction uridine(1939) in 23S rRNA + S-adenosyl-L-methionine = 5-methyluridine(1939) in 23S rRNA + S-adenosyl-L-homocysteine + H(+). Functionally, catalyzes the formation of 5-methyl-uridine at position 1939 (m5U1939) in 23S rRNA. The chain is 23S rRNA (uracil(1939)-C(5))-methyltransferase RlmD from Pseudomonas putida (strain ATCC 47054 / DSM 6125 / CFBP 8728 / NCIMB 11950 / KT2440).